The chain runs to 202 residues: Large ribosomal subunit protein bL25 (202 aa).

This sequence belongs to the bacterial ribosomal protein bL25 family. CTC subfamily. Part of the 50S ribosomal subunit; part of the 5S rRNA/L5/L18/L25 subcomplex. Contacts the 5S rRNA. Binds to the 5S rRNA independently of L5 and L18.

Its function is as follows. This is one of the proteins that binds to the 5S RNA in the ribosome where it forms part of the central protuberance. In Chlorobium luteolum (strain DSM 273 / BCRC 81028 / 2530) (Pelodictyon luteolum), this protein is Large ribosomal subunit protein bL25.